A 445-amino-acid polypeptide reads, in one-letter code: E3 ubiquitin-protein ligase MYLIP (445 aa).

The region spanning Met1–Thr279 is the FERM domain. The interval Arg341 to Cys363 is disordered. A compositionally biased stretch (low complexity) spans Pro350 to Cys363. Fe cation-binding residues include Cys360, Cys363, and Cys368. An RING-type zinc finger spans residues Cys387 to Arg422. Residues Val431 to Leu433 form a critical for homodimerization region.

In terms of assembly, homodimer. Interacts with the E2 ubiquitin-conjugating enzyme, UBE2D1 (via RING-type zinc finger). Interacts with myosin regulatory light chain (MRLC) and TMEM4. Post-translationally, autoubiquitinated. Expressed in developing and adult brain, hippocampus, cerebellum, cerebral cortex, thalamus and substantia nigra. Predominantly found in neurons.

Its subcellular location is the cytoplasm. The protein localises to the cell membrane. The catalysed reaction is S-ubiquitinyl-[E2 ubiquitin-conjugating enzyme]-L-cysteine + [acceptor protein]-L-lysine = [E2 ubiquitin-conjugating enzyme]-L-cysteine + N(6)-ubiquitinyl-[acceptor protein]-L-lysine.. It participates in protein modification; protein ubiquitination. Can bind 1 iron ion per dimer. Iron binding seems to decrease LDLR degradation activity. Functionally, E3 ubiquitin-protein ligase that mediates ubiquitination and subsequent proteasomal degradation of myosin regulatory light chain (MRLC), LDLR, VLDLR and LRP8. Activity depends on E2 enzymes of the UBE2D family. Proteasomal degradation of MRLC leads to inhibit neurite outgrowth in presence of NGF by counteracting the stabilization of MRLC by saposin-like protein (CNPY2/MSAP) and reducing CNPY2-stimulated neurite outgrowth. Acts as a sterol-dependent inhibitor of cellular cholesterol uptake by mediating ubiquitination and subsequent degradation of LDLR. The chain is E3 ubiquitin-protein ligase MYLIP (Mylip) from Rattus norvegicus (Rat).